We begin with the raw amino-acid sequence, 276 residues long: UPF0761 membrane protein APL_1950 (276 aa).

7 helical membrane passes run 33–53 (TLAI…FPIF), 90–110 (MGIV…QSID), 125–145 (IFIS…LAGG), 147–167 (IAIS…LLSF), 171–191 (LLQY…YWLV), 203–223 (LGAI…VWYI), and 239–259 (LPIM…GGLI).

It belongs to the UPF0761 family.

The protein resides in the cell inner membrane. The protein is UPF0761 membrane protein APL_1950 of Actinobacillus pleuropneumoniae serotype 5b (strain L20).